A 633-amino-acid polypeptide reads, in one-letter code: DNA topoisomerase 1 (633 aa).

The region spanning 6 to 115 (KKYIVVESPA…KNRIVFSEIT (110 aa)) is the Toprim domain. Mg(2+) is bound by residues glutamate 12 and aspartate 84. A Topo IA-type catalytic domain is found at 130 to 543 (DMKKVRAQLA…EFYESFSSVF (414 aa)). An interaction with DNA region spans residues 164 to 169 (SAGRVQ). Residue tyrosine 288 is the O-(5'-phospho-DNA)-tyrosine intermediate of the active site. 2 disulfide bridges follow: cysteine 559–cysteine 578 and cysteine 561–cysteine 580. The C4-type zinc finger occupies 559 to 580 (CSCGKEMRLSFGKYGFYLKCEC). The interval 601-633 (LGRKDSESGSPDGRSVEGKGNLSEKRRKGKKGS) is disordered.

It belongs to the type IA topoisomerase family. In terms of assembly, monomer. Requires Mg(2+) as cofactor.

The catalysed reaction is ATP-independent breakage of single-stranded DNA, followed by passage and rejoining.. Functionally, releases the supercoiling and torsional tension of DNA, which is introduced during the DNA replication and transcription, by transiently cleaving and rejoining one strand of the DNA duplex. Introduces a single-strand break via transesterification at a target site in duplex DNA. The scissile phosphodiester is attacked by the catalytic tyrosine of the enzyme, resulting in the formation of a DNA-(5'-phosphotyrosyl)-enzyme intermediate and the expulsion of a 3'-OH DNA strand. The free DNA strand then undergoes passage around the unbroken strand, thus removing DNA supercoils. Finally, in the religation step, the DNA 3'-OH attacks the covalent intermediate to expel the active-site tyrosine and restore the DNA phosphodiester backbone. The chain is DNA topoisomerase 1 from Thermotoga maritima (strain ATCC 43589 / DSM 3109 / JCM 10099 / NBRC 100826 / MSB8).